The chain runs to 355 residues: Uroporphyrinogen decarboxylase (355 aa).

Substrate is bound by residues 27–31 (RQAGR), aspartate 77, tyrosine 154, threonine 209, and histidine 327.

Belongs to the uroporphyrinogen decarboxylase family. Homodimer.

The protein localises to the cytoplasm. The enzyme catalyses uroporphyrinogen III + 4 H(+) = coproporphyrinogen III + 4 CO2. Its pathway is porphyrin-containing compound metabolism; protoporphyrin-IX biosynthesis; coproporphyrinogen-III from 5-aminolevulinate: step 4/4. Its function is as follows. Catalyzes the decarboxylation of four acetate groups of uroporphyrinogen-III to yield coproporphyrinogen-III. In Aeromonas salmonicida (strain A449), this protein is Uroporphyrinogen decarboxylase.